Consider the following 92-residue polypeptide: Large ribosomal subunit protein uL23c (92 aa).

Belongs to the universal ribosomal protein uL23 family. Part of the 50S ribosomal subunit.

It localises to the plastid. Its subcellular location is the chloroplast. Functionally, binds to 23S rRNA. The sequence is that of Large ribosomal subunit protein uL23c (rpl23) from Mesostigma viride (Green alga).